The chain runs to 629 residues: uncharacterized protein (629 aa).

His-562 acts as the Proton acceptor in catalysis.

This sequence belongs to the GMC oxidoreductase family. FAD is required as a cofactor.

This is an uncharacterized protein from Mycobacterium tuberculosis (strain CDC 1551 / Oshkosh).